Reading from the N-terminus, the 226-residue chain is MLTWLSRTNYDFPPLDKALQEPNGLLAAGGDLDPRRLIAAYRHGCFPWYQDGQPILWWSPDPRTVLLPEELHVSRSLAKCLRQQRFEVTFNRDFRAVIQACAAPRDYADGTWITTPMQLAYQELHLRGVAHSVEVWQAGQLVGGLYGLAMGRLFFGESMFSRADNASKVGFVTLVRHLRDAGFVLIDCQMPTRHLHSLGARAISREAFADYLQRYRDESPSGTLDF.

This sequence belongs to the L/F-transferase family.

The protein resides in the cytoplasm. It carries out the reaction N-terminal L-lysyl-[protein] + L-leucyl-tRNA(Leu) = N-terminal L-leucyl-L-lysyl-[protein] + tRNA(Leu) + H(+). It catalyses the reaction N-terminal L-arginyl-[protein] + L-leucyl-tRNA(Leu) = N-terminal L-leucyl-L-arginyl-[protein] + tRNA(Leu) + H(+). The catalysed reaction is L-phenylalanyl-tRNA(Phe) + an N-terminal L-alpha-aminoacyl-[protein] = an N-terminal L-phenylalanyl-L-alpha-aminoacyl-[protein] + tRNA(Phe). In terms of biological role, functions in the N-end rule pathway of protein degradation where it conjugates Leu, Phe and, less efficiently, Met from aminoacyl-tRNAs to the N-termini of proteins containing an N-terminal arginine or lysine. This is Leucyl/phenylalanyl-tRNA--protein transferase from Pseudomonas paraeruginosa (strain DSM 24068 / PA7) (Pseudomonas aeruginosa (strain PA7)).